We begin with the raw amino-acid sequence, 203 residues long: Large ribosomal subunit protein bL25 (203 aa).

It belongs to the bacterial ribosomal protein bL25 family. CTC subfamily. Part of the 50S ribosomal subunit; part of the 5S rRNA/L5/L18/L25 subcomplex. Contacts the 5S rRNA. Binds to the 5S rRNA independently of L5 and L18.

Its function is as follows. This is one of the proteins that binds to the 5S RNA in the ribosome where it forms part of the central protuberance. The polypeptide is Large ribosomal subunit protein bL25 (Rickettsia typhi (strain ATCC VR-144 / Wilmington)).